A 38-amino-acid chain; its full sequence is Large ribosomal subunit protein bL36 (38 aa).

This sequence belongs to the bacterial ribosomal protein bL36 family.

In Hahella chejuensis (strain KCTC 2396), this protein is Large ribosomal subunit protein bL36.